Reading from the N-terminus, the 879-residue chain is Metabotropic glutamate receptor 3 (879 aa).

The first 22 residues, 1–22, serve as a signal peptide directing secretion; that stretch reads MKMLTRLQVLMLALFSKGFLVS. Topologically, residues 23-576 are extracellular; the sequence is LGDHNFMRRE…EDYIRWEDAW (554 aa). An intrachain disulfide couples Cys-57 to Cys-99. L-glutamate is bound by residues Ser-151 and 172 to 174; that span reads AST. Asn-209 is a glycosylation site (N-linked (GlcNAc...) asparagine). Position 222 (Tyr-222) interacts with L-glutamate. 7 disulfides stabilise this stretch: Cys-240–Cys-527, Cys-361–Cys-373, Cys-412–Cys-419, Cys-509–Cys-528, Cys-513–Cys-531, Cys-534–Cys-546, and Cys-549–Cys-562. Asn-292 carries an N-linked (GlcNAc...) asparagine glycan. Asp-301 is a binding site for L-glutamate. L-glutamate is bound at residue Lys-389. N-linked (GlcNAc...) asparagine glycans are attached at residues Asn-414 and Asn-439. The helical transmembrane segment at 577-599 threads the bilayer; sequence AIGPVTIACLGFMCTCIVITVFI. At 600–613 the chain is on the cytoplasmic side; it reads KHNNTPLVKASGRE. The helical transmembrane segment at 614–634 threads the bilayer; sequence LCYILLFGVSLSYCMTFFFIA. The Extracellular segment spans residues 635–645; that stretch reads KPSPVICALRR. The helical transmembrane segment at 646-664 threads the bilayer; the sequence is LGLGTSFAICYSALLTKTN. Over 665–688 the chain is Cytoplasmic; that stretch reads CIARIFDGVKNGAQRPKFISPSSQ. A helical transmembrane segment spans residues 689–709; sequence VFICLGLILVQIVMVSVWLIL. Residues 710 to 734 lie on the Extracellular side of the membrane; sequence ETPGTRRYTLPEKRETVILKCNVKD. A helical transmembrane segment spans residues 735–756; it reads SSMLISLTYDVVLVILCTVYAF. The Cytoplasmic segment spans residues 757 to 769; that stretch reads KTRKCPENFNEAK. Residues 770-792 traverse the membrane as a helical segment; that stretch reads FIGFTMYTTCIIWLAFLPIFYVT. The Extracellular portion of the chain corresponds to 793 to 802; that stretch reads SSDYRVQTTT. Residues 803 to 828 form a helical membrane-spanning segment; that stretch reads MCISVSLSGFVVLGCLFAPKVHIVLF. The Cytoplasmic portion of the chain corresponds to 829–879; the sequence is QPQKNVVTHRLHLNRFSVSGTATTYSQSSASTYVPTVCNGREVLDSTTSSL.

This sequence belongs to the G-protein coupled receptor 3 family. In terms of assembly, interacts with TAMALIN.

The protein resides in the cell membrane. Functionally, G-protein coupled receptor for glutamate. Ligand binding causes a conformation change that triggers signaling via guanine nucleotide-binding proteins (G proteins) and modulates the activity of down-stream effectors. Signaling inhibits adenylate cyclase activity. The protein is Metabotropic glutamate receptor 3 (Grm3) of Mus musculus (Mouse).